Consider the following 518-residue polypeptide: MLKKSRVLGKIPIPYLIKGSSCFYSTVVTSAPITLEDSLQSILSDIQDGSNIVTPNKPNTNLLTSKQPIKALKHLQWKTNLRVKKTTRLLKYSNEKLTPEDYSVFVNQLMDVYSKDIELLNKTEVWKSLYHIYRVFVVNAVDDGNAMVLYDLNQFVRMFINLNDLPLARNVFQLILKNSKNGEIPKDVQTICMYLRLYCGALSELWTTQTSRNFYQDLIGSLSGSNASSIRIPSHIAYPTIGVPQFQLLLRKLVEDPEYSKLRNTEMDSLIIQALGHYKEVPFLKQYISIFYGIDENVTITETHPGIKKLTPDSQLLKSVISAYGHNNNITSGMTVIGSFMEKYPEMNLDKSFWRTTIYWSLREWNKYKDSKGSQPKKAWNLMLNWYATIGKAVPFDQKIMLYRLSFLKSRKDHNAAIRDVQQVFKRIFIKTEKNTFIVERLVLYAYQRFIIKNLVNQNENAKCVDFINEWRIDFENGRYLERYFKELTHPKNESDEQKKLNDEDDDYNFPLFGTNIL.

The transit peptide at 1-15 (MLKKSRVLGKIPIPY) directs the protein to the mitochondrion.

It belongs to the AEP2 family. As to quaternary structure, binds to the 5'UTR of the OLI1 mRNA.

The protein resides in the mitochondrion. Functionally, required for translation of the mitochondrial OLI1 transcript coding for the mitochondrial ATP synthase subunit 9. The sequence is that of ATPase expression protein 2, mitochondrial (AEP2) from Kluyveromyces lactis (strain ATCC 8585 / CBS 2359 / DSM 70799 / NBRC 1267 / NRRL Y-1140 / WM37) (Yeast).